A 499-amino-acid chain; its full sequence is MFSRRNLLALGLAATVSAGPCDIYEAGDTPCVAAHSTTRALYSSFSGALYQLQRGSDDTTTTISPLTAGGIADASAQDTFCANTTCLITIIYDQSGNGNHLTQAPPGGFDGPDTDGYDNLASAIGAPVTLNGQKAYGVFMSPGTGYRNNEATGTATGDEAEGMYAVLDGTHYNDACCFDYGNAETSSTDTGAGHMEAIYLGNSTTWGYGAGDGPWIMVDMENNLFSGADEGYNSGDPSISYRFVTAAVKGGADKWAIRGANAASGSLSTYYSGARPDYSGYNPMSKEGAIILGIGGDNSNGAQGTFYEGVMTSGYPSDDTENSVQENIVAAKYVVGSLVSGPSFTSGEVVSLRVTTPGYTTRYIAHTDTTVNTQVVDDDSSTTLKEEASWTVVTGLANSQCFSFESVDTPGSYIRHYNFELLLNANDGTKQFHEDATFCPQAALNGEGTSLRSWSYPTRYFRHYENVLYAASNGGVQTFDSKTSFNNDVSFEIETAFAS.

The N-terminal stretch at 1–17 (MFSRRNLLALGLAATVS) is a signal peptide. The interval 18 to 335 (AGPCDIYEAG…ENIVAAKYVV (318 aa)) is catalytic. 3 disulfides stabilise this stretch: cysteine 21–cysteine 31, cysteine 81–cysteine 86, and cysteine 176–cysteine 177. The N-linked (GlcNAc...) asparagine glycan is linked to asparagine 83. Asparagine 202 is a glycosylation site (N-linked (GlcNAc...) asparagine). Residue aspartate 219 participates in substrate binding. The Nucleophile role is filled by glutamate 221. Substrate is bound by residues asparagine 222, asparagine 223, and glycine 296. Residue aspartate 297 is the Proton donor of the active site. The ABD stretch occupies residues 336-499 (GSLVSGPSFT…SFEIETAFAS (164 aa)). Cysteine 401 and cysteine 439 form a disulfide bridge. Substrate contacts are provided by histidine 416, asparagine 418, phenylalanine 419, aspartate 435, histidine 463, glutamate 465, leucine 468, and aspartate 488.

The protein belongs to the glycosyl hydrolase 54 family.

It is found in the secreted. The catalysed reaction is Hydrolysis of terminal non-reducing alpha-L-arabinofuranoside residues in alpha-L-arabinosides.. It participates in glycan metabolism; L-arabinan degradation. Its function is as follows. Alpha-L-arabinofuranosidase involved in the degradation of arabinoxylan, a major component of plant hemicellulose. Able to hydrolyze 1,5-, 1,3- and 1,2-alpha-linkages not only in L-arabinofuranosyl oligosaccharides, but also in polysaccharides containing terminal non-reducing L-arabinofuranoses in side chains, like L-arabinan, arabinogalactan and arabinoxylan. This chain is Alpha-L-arabinofuranosidase B (abfB), found in Aspergillus kawachii (strain NBRC 4308) (White koji mold).